The chain runs to 133 residues: ATP synthase epsilon chain, chloroplastic (133 aa).

This sequence belongs to the ATPase epsilon chain family. In terms of assembly, F-type ATPases have 2 components, CF(1) - the catalytic core - and CF(0) - the membrane proton channel. CF(1) has five subunits: alpha(3), beta(3), gamma(1), delta(1), epsilon(1). CF(0) has three main subunits: a, b and c.

Its subcellular location is the plastid. The protein resides in the chloroplast thylakoid membrane. Produces ATP from ADP in the presence of a proton gradient across the membrane. The protein is ATP synthase epsilon chain, chloroplastic of Mesostigma viride (Green alga).